A 223-amino-acid chain; its full sequence is Endonuclease V (223 aa).

The Mg(2+) site is built by D35 and D103.

This sequence belongs to the endonuclease V family. Mg(2+) is required as a cofactor.

The protein resides in the cytoplasm. It catalyses the reaction Endonucleolytic cleavage at apurinic or apyrimidinic sites to products with a 5'-phosphate.. In terms of biological role, DNA repair enzyme involved in the repair of deaminated bases. Selectively cleaves double-stranded DNA at the second phosphodiester bond 3' to a deoxyinosine leaving behind the intact lesion on the nicked DNA. This is Endonuclease V from Shigella dysenteriae serotype 1 (strain Sd197).